A 671-amino-acid chain; its full sequence is UvrABC system protein B (671 aa).

The region spanning 35 to 423 (KAIIENKKHQ…NHQVVQQIIR (389 aa)) is the Helicase ATP-binding domain. 48 to 55 (GATGTGKT) is a binding site for ATP. A Beta-hairpin motif is present at residues 101-124 (NFDFFQPEAYIPSKDLYIDKDSRQ). Residues 440–602 (QIDDIINEIH…IVPKTISKAI (163 aa)) enclose the Helicase C-terminal domain. In terms of domain architecture, UVR spans 632-667 (QQTIDNLRQEMLQAAKELDFERAAILRDTIIELENE).

The protein belongs to the UvrB family. As to quaternary structure, forms a heterotetramer with UvrA during the search for lesions. Interacts with UvrC in an incision complex.

Its subcellular location is the cytoplasm. Its function is as follows. The UvrABC repair system catalyzes the recognition and processing of DNA lesions. A damage recognition complex composed of 2 UvrA and 2 UvrB subunits scans DNA for abnormalities. Upon binding of the UvrA(2)B(2) complex to a putative damaged site, the DNA wraps around one UvrB monomer. DNA wrap is dependent on ATP binding by UvrB and probably causes local melting of the DNA helix, facilitating insertion of UvrB beta-hairpin between the DNA strands. Then UvrB probes one DNA strand for the presence of a lesion. If a lesion is found the UvrA subunits dissociate and the UvrB-DNA preincision complex is formed. This complex is subsequently bound by UvrC and the second UvrB is released. If no lesion is found, the DNA wraps around the other UvrB subunit that will check the other stand for damage. This chain is UvrABC system protein B, found in Mycoplasma mycoides subsp. mycoides SC (strain CCUG 32753 / NCTC 10114 / PG1).